A 327-amino-acid chain; its full sequence is MAWWKAWVEQEGVSVKGSSHFNPDPDAETLYKAMKGIGTNEQAIIDVLTKRSNVQRQQIAKSFKAQFGKDLTETLKSELSGKFERLIVALMYPPYRYEAKELHDAMKGLGTKEGVIIEILASRTKNQLREIMKAYEEDYGSTLEEDIQGDTSGYLERILVCLLQGCRDDVSGFVDPGLALQDAQDLHAAGEKILGTDEMKFITILCTRSATHLMRVFEEYEKIANKSIEDSIKSETHGSLEEAMLTVVKCTRNVHSYFAERLYYAMKGAGTLDGTLIRNIVSRSEIDLNLIKSQFQKMYGKTLSSMIMGDTSGYYKTALLNLVGTDL.

Annexin repeat units follow at residues 21 to 92, 93 to 164, 177 to 249, and 253 to 324; these read FNPD…ALMY, PPYR…CLLQ, GLAL…TVVK, and NVHS…NLVG. 4 residues coordinate Ca(2+): methionine 266, glycine 268, glycine 270, and aspartate 310.

The protein belongs to the annexin family.

In terms of biological role, this protein is an anticoagulant protein that acts as an indirect inhibitor of the thromboplastin-specific complex, which is involved in the blood coagulation cascade. The sequence is that of Annexin A8 (Anxa8) from Rattus norvegicus (Rat).